Reading from the N-terminus, the 35-residue chain is U14-ctenitoxin-Pn1a (35 aa).

Intrachain disulfides connect cysteine 3/cysteine 17, cysteine 10/cysteine 22, and cysteine 16/cysteine 32.

Expressed by the venom gland.

The protein localises to the secreted. Neurotoxin. The protein is U14-ctenitoxin-Pn1a of Phoneutria nigriventer (Brazilian armed spider).